The primary structure comprises 126 residues: Glycine cleavage system H protein (126 aa).

A Lipoyl-binding domain is found at 22–104 (IATVGITAFA…YGRGWLFKVE (83 aa)). K63 carries the N6-lipoyllysine modification.

It belongs to the GcvH family. The glycine cleavage system is composed of four proteins: P, T, L and H. (R)-lipoate is required as a cofactor.

Its function is as follows. The glycine cleavage system catalyzes the degradation of glycine. The H protein shuttles the methylamine group of glycine from the P protein to the T protein. The polypeptide is Glycine cleavage system H protein (Thermobifida fusca (strain YX)).